A 362-amino-acid chain; its full sequence is Ferrochelatase (362 aa).

Fe cation is bound by residues His-228 and Glu-309.

This sequence belongs to the ferrochelatase family.

Its subcellular location is the cytoplasm. It catalyses the reaction heme b + 2 H(+) = protoporphyrin IX + Fe(2+). It participates in porphyrin-containing compound metabolism; protoheme biosynthesis; protoheme from protoporphyrin-IX: step 1/1. Functionally, catalyzes the ferrous insertion into protoporphyrin IX. The protein is Ferrochelatase of Bordetella bronchiseptica (strain ATCC BAA-588 / NCTC 13252 / RB50) (Alcaligenes bronchisepticus).